The following is a 458-amino-acid chain: Elongation factor 1-alpha 1 (458 aa).

N,N,N-trimethylglycine is present on G2. At K3 the chain carries N6,N6-dimethyllysine; alternate. K3 is modified (N6-methyllysine; alternate). Positions 5–240 (KTHVNVVVIG…DAIEPPTRPT (236 aa)) constitute a tr-type G domain. The G1 stretch occupies residues 14-21 (GHVDSGKS). 14 to 21 (GHVDSGKS) is a binding site for GTP. At K30 the chain carries N6-methyllysine. The tract at residues 70 to 74 (GITID) is G2. K79 carries the N6,N6,N6-trimethyllysine modification. Residues 91 to 94 (DAPG) form a G3 region. Residues 91–95 (DAPGH) and 153–156 (NKMD) contribute to the GTP site. Positions 153-156 (NKMD) are G4. The segment at 192–194 (SGW) is G5. K316 bears the N6,N6-dimethyllysine; alternate mark. N6-methyllysine; alternate is present on K316. K390 is subject to N6-methyllysine.

It belongs to the TRAFAC class translation factor GTPase superfamily. Classic translation factor GTPase family. EF-Tu/EF-1A subfamily.

It localises to the cytoplasm. Functionally, this protein promotes the GTP-dependent binding of aminoacyl-tRNA to the A-site of ribosomes during protein biosynthesis. This Candida albicans (strain SC5314 / ATCC MYA-2876) (Yeast) protein is Elongation factor 1-alpha 1 (TEF1).